The sequence spans 471 residues: Putative ABC transporter ATP-binding protein STK_11360 (471 aa).

ABC transporter domains follow at residues 4–241 and 255–470; these read LEIK…LEPL and VILE…VIKD. ATP is bound by residues 37–44 and 286–293; these read GKSGSGKS and GDNGSGKS.

The protein belongs to the ABC transporter superfamily.

Its subcellular location is the cell membrane. Probably part of an ABC transporter complex. Responsible for energy coupling to the transport system. The sequence is that of Putative ABC transporter ATP-binding protein STK_11360 from Sulfurisphaera tokodaii (strain DSM 16993 / JCM 10545 / NBRC 100140 / 7) (Sulfolobus tokodaii).